The chain runs to 779 residues: Chloride channel protein CLC-c (779 aa).

Serine 27 bears the Phosphoserine mark. The next 12 helical transmembrane spans lie at 92–112, 142–162, 190–210, 215–235, 257–277, 287–307, 341–361, 380–400, 466–486, 488–508, 520–540, and 541–561; these read TFLK…VGFL, FAFA…CAFI, STLF…FVVG, MVHT…KKYR, GAAA…LFAL, ALLW…RSLI, LAIV…NYLV, IMLV…LPWL, LAIF…IAIP, GLFI…GRLL, SLLG…SLCV, and ILLE…VLLI. The region spanning 601–659 is the CBS 1 domain; that stretch reads DVVSGALISFSRVEKVGVIWQALKMTRHNGFPVIDEPPFTEASELCGIALRSHLLVLLQ. Residue serine 672 is modified to Phosphoserine. Positions 713 to 777 constitute a CBS 2 domain; it reads ITNTSPYTVL…VLGLYPHIDP (65 aa). The chain crosses the membrane as a helical span at residues 741–761; the sequence is HLCVVPKTPGRPPIVGILTRH.

This sequence belongs to the chloride channel (TC 2.A.49) family. Homodimer. Interacts with PP2A5. Broadly expressed in the plant.

The protein resides in the membrane. In terms of biological role, voltage-gated chloride channel. The protein is Chloride channel protein CLC-c (CLC-C) of Arabidopsis thaliana (Mouse-ear cress).